Consider the following 120-residue polypeptide: Aspartate 1-decarboxylase (120 aa).

The active-site Schiff-base intermediate with substrate; via pyruvic acid is Ser25. Position 25 is a pyruvic acid (Ser) (Ser25). Substrate is bound at residue Thr57. Catalysis depends on Tyr58, which acts as the Proton donor. Residue Gly73–Ala75 participates in substrate binding.

Belongs to the PanD family. As to quaternary structure, heterooctamer of four alpha and four beta subunits. Pyruvate is required as a cofactor. Is synthesized initially as an inactive proenzyme, which is activated by self-cleavage at a specific serine bond to produce a beta-subunit with a hydroxyl group at its C-terminus and an alpha-subunit with a pyruvoyl group at its N-terminus.

It localises to the cytoplasm. The enzyme catalyses L-aspartate + H(+) = beta-alanine + CO2. The protein operates within cofactor biosynthesis; (R)-pantothenate biosynthesis; beta-alanine from L-aspartate: step 1/1. Catalyzes the pyruvoyl-dependent decarboxylation of aspartate to produce beta-alanine. This is Aspartate 1-decarboxylase from Ralstonia nicotianae (strain ATCC BAA-1114 / GMI1000) (Ralstonia solanacearum).